Here is a 40-residue protein sequence, read N- to C-terminus: Photosystem II reaction center protein J (40 aa).

Residues 8–28 (IPLWLIGTVAGILVLGLLGIF) traverse the membrane as a helical segment.

The protein belongs to the PsbJ family. In terms of assembly, PSII is composed of 1 copy each of membrane proteins PsbA, PsbB, PsbC, PsbD, PsbE, PsbF, PsbH, PsbI, PsbJ, PsbK, PsbL, PsbM, PsbT, PsbX, PsbY, PsbZ, Psb30/Ycf12, at least 3 peripheral proteins of the oxygen-evolving complex and a large number of cofactors. It forms dimeric complexes.

It is found in the plastid. The protein resides in the chloroplast thylakoid membrane. Its function is as follows. One of the components of the core complex of photosystem II (PSII). PSII is a light-driven water:plastoquinone oxidoreductase that uses light energy to abstract electrons from H(2)O, generating O(2) and a proton gradient subsequently used for ATP formation. It consists of a core antenna complex that captures photons, and an electron transfer chain that converts photonic excitation into a charge separation. This Physcomitrium patens (Spreading-leaved earth moss) protein is Photosystem II reaction center protein J.